A 194-amino-acid chain; its full sequence is MSQIKLIVGLANPGAKYEGTRHNAGEWLVNELARMYNTSLKDEAKYFGKTAKINTVNGDVWLLIPTTFMNLSGKAVGALAHFFRIKAEEILIAHDELDLPPGVAKLKQGGGHGGHNGLKDIISALGNNNNFYRIRLGIGHPGHKDQVAGYVLSKPAPQDQQKINAVIDEASRCLEILFKDGVTSATNRLNSFKA.

A tRNA-binding site is contributed by tyrosine 17. The active-site Proton acceptor is the histidine 22. 3 residues coordinate tRNA: phenylalanine 68, asparagine 70, and asparagine 116.

Belongs to the PTH family. Monomer.

It localises to the cytoplasm. It catalyses the reaction an N-acyl-L-alpha-aminoacyl-tRNA + H2O = an N-acyl-L-amino acid + a tRNA + H(+). In terms of biological role, hydrolyzes ribosome-free peptidyl-tRNAs (with 1 or more amino acids incorporated), which drop off the ribosome during protein synthesis, or as a result of ribosome stalling. Catalyzes the release of premature peptidyl moieties from peptidyl-tRNA molecules trapped in stalled 50S ribosomal subunits, and thus maintains levels of free tRNAs and 50S ribosomes. This is Peptidyl-tRNA hydrolase from Haemophilus ducreyi (strain 35000HP / ATCC 700724).